We begin with the raw amino-acid sequence, 713 residues long: Polyribonucleotide nucleotidyltransferase (713 aa).

Mg(2+) is bound by residues D494 and D500. Positions 561–623 (PSFSTMTIPK…EAVQSAEKRV (63 aa)) constitute a KH domain. In terms of domain architecture, S1 motif spans 633-702 (GDVYQGTVKS…KSGKYKLSRK (70 aa)).

It belongs to the polyribonucleotide nucleotidyltransferase family. Requires Mg(2+) as cofactor.

The protein localises to the cytoplasm. It carries out the reaction RNA(n+1) + phosphate = RNA(n) + a ribonucleoside 5'-diphosphate. Functionally, involved in mRNA degradation. Catalyzes the phosphorolysis of single-stranded polyribonucleotides processively in the 3'- to 5'-direction. The sequence is that of Polyribonucleotide nucleotidyltransferase from Amoebophilus asiaticus (strain 5a2).